Here is a 400-residue protein sequence, read N- to C-terminus: Protection of telomeres homolog 1 (400 aa).

This sequence belongs to the telombin family. In terms of tissue distribution, expressed in sperm and oocytes.

Its subcellular location is the nucleus. It localises to the nucleus envelope. The protein localises to the chromosome. The protein resides in the telomere. Functionally, telomeric DNA-binding protein, which binds to single-stranded C-rich repeat sequences, with high specificity to the 5'-GCCTAA-3' sequence. Repeat sequence binding can be at the 5' or 3' telomeric end. May have a role in protecting the 5' end of the C-rich strand of the telomere. Acts redundantly with pot-2 to negatively regulate telomerase-mediated telomere extension. Also regulates telomere length by the telomerase-independent telomere maintenance pathway called ALT (alternative lengthening of telomeres). Through sun-1, anchors telomeres to the nuclear envelope in embryos. The protein is Protection of telomeres homolog 1 of Caenorhabditis elegans.